The chain runs to 804 residues: Phenylalanine--tRNA ligase beta subunit (804 aa).

The tRNA-binding domain maps to 40–155; the sequence is GEGIKGVVIG…GDAETGADAL (116 aa). The region spanning 409–484 is the B5 domain; it reads IKENVIRLSV…RLYGYDNIPS (76 aa). Mg(2+)-binding residues include Asp462, Asp468, Glu471, and Glu472. The FDX-ACB domain occupies 710–803; that stretch reads PKYPSVTRDI…LEDKYQAVLR (94 aa).

Belongs to the phenylalanyl-tRNA synthetase beta subunit family. Type 1 subfamily. In terms of assembly, tetramer of two alpha and two beta subunits. The cofactor is Mg(2+).

The protein localises to the cytoplasm. It catalyses the reaction tRNA(Phe) + L-phenylalanine + ATP = L-phenylalanyl-tRNA(Phe) + AMP + diphosphate + H(+). This Bacillus licheniformis (strain ATCC 14580 / DSM 13 / JCM 2505 / CCUG 7422 / NBRC 12200 / NCIMB 9375 / NCTC 10341 / NRRL NRS-1264 / Gibson 46) protein is Phenylalanine--tRNA ligase beta subunit.